The sequence spans 303 residues: tRNA pseudouridine synthase B (303 aa).

D47 acts as the Nucleophile in catalysis.

The protein belongs to the pseudouridine synthase TruB family. Type 1 subfamily.

It carries out the reaction uridine(55) in tRNA = pseudouridine(55) in tRNA. In terms of biological role, responsible for synthesis of pseudouridine from uracil-55 in the psi GC loop of transfer RNAs. The chain is tRNA pseudouridine synthase B from Legionella pneumophila (strain Lens).